Consider the following 393-residue polypeptide: Sulfite oxidase (393 aa).

The interval 1-27 (MPGIRGPSEYSQEPPRHPSLKVNAKEP) is disordered. The tract at residues 10-242 (YSQEPPRHPS…QGFFMQKDYK (233 aa)) is moco domain. Residues 49–53 (YKRNH), Cys98, 159–161 (SVD), His202, Arg207, and 218–220 (SVK) each bind Mo-molybdopterin. The interval 243–393 (MFPPSVNWDN…VLLRLGHSNL (151 aa)) is homodimerization. Residues 391–393 (SNL) carry the Microbody targeting signal motif.

Predominantly monomer; also homodimer. It depends on Mo-molybdopterin as a cofactor.

The protein localises to the peroxisome. The enzyme catalyses sulfite + O2 + H2O = sulfate + H2O2. It functions in the pathway energy metabolism; sulfur metabolism. Probably involved in sulfite oxidative detoxification. This is Sulfite oxidase (SOX) from Arabidopsis thaliana (Mouse-ear cress).